The chain runs to 89 residues: Large ribosomal subunit protein bL27 (89 aa).

Residues M1–L21 form a disordered region.

This sequence belongs to the bacterial ribosomal protein bL27 family.

This is Large ribosomal subunit protein bL27 from Bradyrhizobium diazoefficiens (strain JCM 10833 / BCRC 13528 / IAM 13628 / NBRC 14792 / USDA 110).